An 82-amino-acid polypeptide reads, in one-letter code: Omega-conotoxin-like TxO6 (82 aa).

The first 22 residues, 1–22, serve as a signal peptide directing secretion; that stretch reads MKLTCVVIVAVLFLTAWTLVMA. Positions 23–50 are excised as a propeptide; that stretch reads DDSNNGLANLFSKSRDEMEDPEAAKLEK. 3 disulfides stabilise this stretch: C53/C71, C60/C76, and C70/C81.

This sequence belongs to the conotoxin O1 superfamily. As to expression, expressed by the venom duct.

It is found in the secreted. Functionally, omega-conotoxins act at presynaptic membranes, they bind and block voltage-gated calcium channels (Cav). The sequence is that of Omega-conotoxin-like TxO6 from Conus textile (Cloth-of-gold cone).